A 131-amino-acid polypeptide reads, in one-letter code: Holo-[acyl-carrier-protein] synthase (131 aa).

Positions 8 and 63 each coordinate Mg(2+).

This sequence belongs to the P-Pant transferase superfamily. AcpS family. Mg(2+) is required as a cofactor.

Its subcellular location is the cytoplasm. The enzyme catalyses apo-[ACP] + CoA = holo-[ACP] + adenosine 3',5'-bisphosphate + H(+). Transfers the 4'-phosphopantetheine moiety from coenzyme A to a Ser of acyl-carrier-protein. This is Holo-[acyl-carrier-protein] synthase from Shewanella pealeana (strain ATCC 700345 / ANG-SQ1).